The chain runs to 769 residues: Portal protein (769 aa).

Residues 458–479 (LEGYVNNLFKTIEGLKDVNSDL) form a putative leucine zipper motif region. 2 disordered regions span residues 654–675 (RGPRRTPSPSWGLPDPTEDDER) and 750–769 (RQLTNTSRRGVGCERRDRRS). Over residues 760 to 769 (VGCERRDRRS) the composition is skewed to basic and acidic residues.

It belongs to the herpesviridae portal protein family. As to quaternary structure, homododecamerizes. Interacts with terminase subunits TRM1 and TRM3.

The protein localises to the virion. It is found in the host nucleus. Forms a portal in the viral capsid through which viral DNA is translocated during DNA packaging. Assembles as a dodecamer at a single fivefold axe of the T=16 icosahedric capsid. Binds to the molecular motor that translocates the viral DNA, termed terminase. This chain is Portal protein (54), found in Homo sapiens (Human).